A 157-amino-acid chain; its full sequence is MGKKDKKNNTLAQNRKAYHDYFIEETFEAGIALVGTEVKSIRGGKANLKDSYASIRNGEVFVCNMHVSPYEQGNIFNRDPLRERKLLLHKSQINTLLGYTAQQGYTLIPLSLYLKNGRVKVALGVAKGKKNYDKRDAIAAKAAKRDIDRQMKERMRY.

It belongs to the SmpB family.

It is found in the cytoplasm. Required for rescue of stalled ribosomes mediated by trans-translation. Binds to transfer-messenger RNA (tmRNA), required for stable association of tmRNA with ribosomes. tmRNA and SmpB together mimic tRNA shape, replacing the anticodon stem-loop with SmpB. tmRNA is encoded by the ssrA gene; the 2 termini fold to resemble tRNA(Ala) and it encodes a 'tag peptide', a short internal open reading frame. During trans-translation Ala-aminoacylated tmRNA acts like a tRNA, entering the A-site of stalled ribosomes, displacing the stalled mRNA. The ribosome then switches to translate the ORF on the tmRNA; the nascent peptide is terminated with the 'tag peptide' encoded by the tmRNA and targeted for degradation. The ribosome is freed to recommence translation, which seems to be the essential function of trans-translation. This chain is SsrA-binding protein, found in Clostridium novyi (strain NT).